A 305-amino-acid polypeptide reads, in one-letter code: Translation initiation factor eIF2B subunit alpha (305 aa).

It belongs to the eIF-2B alpha/beta/delta subunits family. Component of the translation initiation factor 2B (eIF2B) complex which is a heterodecamer of two sets of five different subunits: alpha, beta, gamma, delta and epsilon. Subunits alpha, beta and delta comprise a regulatory subcomplex and subunits epsilon and gamma comprise a catalytic subcomplex. Within the complex, the hexameric regulatory complex resides at the center, with the two heterodimeric catalytic subcomplexes bound on opposite sides.

It localises to the cytoplasm. Its subcellular location is the cytosol. Its activity is regulated as follows. Activated by the chemical integrated stress response (ISR) inhibitor ISRIB which stimulates guanine nucleotide exchange factor activity for both phosphorylated and unphosphorylated eIF2. In terms of biological role, acts as a component of the translation initiation factor 2B (eIF2B) complex, which catalyzes the exchange of GDP for GTP on eukaryotic initiation factor 2 (eIF2) gamma subunit. Its guanine nucleotide exchange factor activity is repressed when bound to eIF2 complex phosphorylated on the alpha subunit, thereby limiting the amount of methionyl-initiator methionine tRNA available to the ribosome and consequently global translation is repressed. The polypeptide is Translation initiation factor eIF2B subunit alpha (EIF2B1) (Bos taurus (Bovine)).